Reading from the N-terminus, the 347-residue chain is Intracellular hyaluronan-binding protein 4 (347 aa).

Disordered regions lie at residues 39 to 221 (GTEK…PSET) and 298 to 347 (FGSL…PALA). 4 stretches are compositionally biased toward basic and acidic residues: residues 61–71 (VKKESQRDRKT), 83–107 (PGHEVVEEPIQRRVTFDRKFNDAEK), 116–125 (RPVDVLDRPA), and 146–174 (DGFDQRGKREFERHSGSDRSSVRSEEKRS). Acidic residues predominate over residues 199–213 (EVTENEETQEAVETD). The segment covering 307-319 (GGRGGRGGRGRGG) has biased composition (gly residues). Over residues 338–347 (DDPEDFPALA) the composition is skewed to acidic residues.

Belongs to the SERBP1-HABP4 family. Associates with ribosomes; promoting ribosome stabilization. Interacts with eef2/eEF2; promoting ribosome stabilization.

It localises to the nucleus. The protein resides in the cytoplasm. Its subcellular location is the stress granule. It is found in the nucleolus. The protein localises to the nucleus speckle. It localises to the cajal body. Its function is as follows. Ribosome-binding protein that promotes ribosome hibernation, a process during which ribosomes are stabilized in an inactive state and preserved from proteasomal degradation. Acts via its association with eef2/eEF2 factor at the A-site of the ribosome, promoting ribosome stabilization in an inactive state compatible with storage. Plays a key role in ribosome hibernation in the mature egg by promoting ribosome stabilization. Ribosomes, which are produced in large quantities during oogenesis, are stored and translationally repressed in the egg and early embryo. The protein is Intracellular hyaluronan-binding protein 4 of Danio rerio (Zebrafish).